Here is a 1053-residue protein sequence, read N- to C-terminus: Serine/threonine-protein phosphatase 6 regulatory ankyrin repeat subunit A (1053 aa).

ANK repeat units lie at residues 40 to 69, 73 to 102, 106 to 135, 139 to 168, 172 to 201, 205 to 234, 238 to 267, 271 to 301, 305 to 334, 338 to 367, 371 to 400, 404 to 433, 437 to 466, 470 to 500, 504 to 534, 549 to 578, 582 to 611, 616 to 645, 652 to 681, 685 to 714, 718 to 747, 755 to 784, 787 to 817, 822 to 851, 855 to 885, 889 to 918, and 925 to 954; these read EKRTPLHAAAYLGDAEIIELLILSGARVNA, KWLTPLHRAVASCSEEAVQVLLKHSADVNA, NWQTPLHIAAANKAVKCAEALVPLLSNVNV, AGRTALHHAAFSGHGEMVKLLLSRGANINA, KDRRAIHWAAYMGHIEVVKLLVSHGAEVTC, KSYTPLHAAASSGMISVVKYLLDLGVDMNE, YGNTPLHVACYNGQDVVVNELIDCGAIVNQ, KGFTPLHFAAASTHGALCLELLVGNGADVNM, DGKTPLHMTALHGRFSRSQTIIQSGAVIDC, NGNTPLHIAARYGHELLINTLITSGADTAK, HGMFPLHLAALSGFSDCCRKLLSSGFDIDT, FGRTCLHAAAAGGNLECLNLLLNTGADFNK, FGRSPLHYAAANCNYQCLFALVGSGASVND, RGCTPLHYAATSDTDGKCLEYLLRNDANPGI, QGYNAVHYSAAYGHRLCLQLIASETPLDVLM, ATISPLHLAAYHGHHQALEVLVQSLLDLDV, SGRTPLDLAAFKGHVECVDVLINQGASILV, LKRTPIHAAATNGHSECLRLLIGNAEPQNA, NGQTPLMLSVLNGHTDCVYSLLNKGANVDA, WGRTALHRGAVTGHEECVDALLQHGAKCLL, RGRTPIHLSAACGHIGVLGALLQSAASMDA, HGYTALHWACYNGHETCVELLLEQEVFQKT, NAFSPLHCAVINDNEGAAEMLIDTLGASIVN, KGRTPLHAAAFTDHVECLQLLLSHNAQVNS, TGKTPLMMAAENGQTNTVEMLVSSASAELTL, SKNTALHLACSKGHETSALLILEKITDRNL, and ALQTPLHVAARNGLTMVVQELLGKGASVLA. A phosphoserine mark is found at Ser1007 and Ser1011.

Protein phosphatase 6 (PP6) holoenzyme is proposed to be a heterotrimeric complex formed by the catalytic subunit, a SAPS domain-containing subunit (PP6R) and an ankyrin repeat-domain containing regulatory subunit (ARS). Interacts with PPP6C, PPP6R1 and PPP6R3. Interacts with PPP1C and HNRPK. In terms of processing, ubiquitinated by the ECS(RAB40C) complex leading to its degradation and decreased PP6 activity.

The protein localises to the nucleus. Its subcellular location is the nucleoplasm. It localises to the cytoplasm. The protein resides in the cytosol. It is found in the cell projection. The protein localises to the lamellipodium. In terms of biological role, regulatory subunit of protein phosphatase 6 (PP6) that may be involved in the recognition of phosphoprotein substrates. Involved in the PP6-mediated dephosphorylation of NFKBIE opposing its degradation in response to TNF-alpha. Selectively inhibits the phosphatase activity of PPP1C. Targets PPP1C to modulate HNRPK phosphorylation. Involved in the PP6-mediated dephosphorylation of MOB1 and induced focal adhesion assembly during cell migration. This is Serine/threonine-protein phosphatase 6 regulatory ankyrin repeat subunit A from Homo sapiens (Human).